The chain runs to 564 residues: Bicarbonate transporter BicA (564 aa).

Topologically, residues 1-11 are cytoplasmic; sequence MQITNKIHFRN. A helical membrane pass occupies residues 12–37; that stretch reads LQGDLFGGVTAAVIALPMALAFGIAS. The Periplasmic portion of the chain corresponds to 38–40; sequence GAG. The chain crosses the membrane as a helical span at residues 41–58; it reads ATAGLWGAVIVGFFAALF. Over 59–70 the chain is Cytoplasmic; the sequence is GGTPTLISEPTG. Thr-69 is a binding site for hydrogencarbonate. Residues 71-86 traverse the membrane as a helical segment; sequence PMTVVQTAVIASLVAA. Residues 87–90 lie on the Periplasmic side of the membrane; it reads DPDN. A helical membrane pass occupies residues 91-112; sequence GLAMAFTVVMMAGLFQIAFGLL. The Cytoplasmic segment spans residues 113 to 122; it reads KLGKYVTMMP. The chain crosses the membrane as a helical span at residues 123–145; the sequence is YTVISGFMSGIGIILVILQLAPF. Residues 146-170 lie on the Periplasmic side of the membrane; the sequence is LGQASPKGGVIGTLQALPNLVSNVR. Residues 171–185 traverse the membrane as a helical segment; the sequence is PVETLLALMTVGIIW. Topologically, residues 186–196 are cytoplasmic; the sequence is FMPSRWKKFAP. A helical membrane pass occupies residues 197-211; the sequence is PQLVALVLGTIISIT. Over 212 to 240 the chain is Periplasmic; sequence LFGDLDIRRIGEIQAGLPALQLPVFQADQ. The helical transmembrane segment at 241–269 threads the bilayer; it reads LQRMLIDAAVLGMLGCIDALLTSVVADSL. Residues Asp-258 and Thr-262 each coordinate Na(+). Topologically, residues 270–275 are cytoplasmic; it reads TRTEHN. Residues 276 to 292 traverse the membrane as a helical segment; the sequence is SNKELVGQGIGNVMSGL. Over 293–302 the chain is Periplasmic; sequence FGGLGGAGAT. Residue Gly-300 participates in Na(+) binding. Residue Ala-301 coordinates hydrogencarbonate. Thr-302 serves as a coordination point for Na(+). The chain crosses the membrane as a helical span at residues 303-312; that stretch reads MGTVVNIQSG. The Cytoplasmic portion of the chain corresponds to 313-315; the sequence is GRT. A helical membrane pass occupies residues 316 to 338; the sequence is ALSGLIRAMVLLVVILGAAKLAA. At 339 to 341 the chain is on the periplasmic side; sequence TIP. A helical transmembrane segment spans residues 342-357; the sequence is LAVLAGIAFKVGVDII. The Cytoplasmic segment spans residues 358–369; that stretch reads DWGFLKRAHHVS. Residues 370–390 form a helical membrane-spanning segment; sequence IKGALIMYAVIVLTVLVDLIA. At 391–392 the chain is on the periplasmic side; sequence AV. A helical transmembrane segment spans residues 393 to 405; that stretch reads GIGVFIANILTID. Topologically, residues 406–564 are cytoplasmic; sequence RMSALQSKAV…PSSSSVQTTY (159 aa). The 111-residue stretch at 432 to 542 folds into the STAS domain; it reads KRWLDEGNGR…DDRSEALKDA (111 aa).

Belongs to the SLC26A/SulP transporter (TC 2.A.53) family. Forms homodimers through the STAS cytoplasmic domain.

The protein resides in the cell inner membrane. Low affinity, high-flux Na(+)-dependent bicarbonate transporter. Involved in carbone dioxide-concentrating mechanisms (CCMs) that accumulate CO(2) and improve photosynthetic carbon fixation. The protein is Bicarbonate transporter BicA of Synechocystis sp. (strain ATCC 27184 / PCC 6803 / Kazusa).